The following is a 549-amino-acid chain: Glucose-6-phosphate isomerase (549 aa).

Glu-355 acts as the Proton donor in catalysis. Catalysis depends on residues His-387 and Lys-515.

Belongs to the GPI family.

It is found in the cytoplasm. It carries out the reaction alpha-D-glucose 6-phosphate = beta-D-fructose 6-phosphate. The protein operates within carbohydrate biosynthesis; gluconeogenesis. Its pathway is carbohydrate degradation; glycolysis; D-glyceraldehyde 3-phosphate and glycerone phosphate from D-glucose: step 2/4. Its function is as follows. Catalyzes the reversible isomerization of glucose-6-phosphate to fructose-6-phosphate. The protein is Glucose-6-phosphate isomerase of Pasteurella multocida (strain Pm70).